We begin with the raw amino-acid sequence, 177 residues long: ATP synthase subunit delta (177 aa).

This sequence belongs to the ATPase delta chain family. As to quaternary structure, F-type ATPases have 2 components, F(1) - the catalytic core - and F(0) - the membrane proton channel. F(1) has five subunits: alpha(3), beta(3), gamma(1), delta(1), epsilon(1). F(0) has three main subunits: a(1), b(2) and c(10-14). The alpha and beta chains form an alternating ring which encloses part of the gamma chain. F(1) is attached to F(0) by a central stalk formed by the gamma and epsilon chains, while a peripheral stalk is formed by the delta and b chains.

It localises to the cell inner membrane. In terms of biological role, f(1)F(0) ATP synthase produces ATP from ADP in the presence of a proton or sodium gradient. F-type ATPases consist of two structural domains, F(1) containing the extramembraneous catalytic core and F(0) containing the membrane proton channel, linked together by a central stalk and a peripheral stalk. During catalysis, ATP synthesis in the catalytic domain of F(1) is coupled via a rotary mechanism of the central stalk subunits to proton translocation. Functionally, this protein is part of the stalk that links CF(0) to CF(1). It either transmits conformational changes from CF(0) to CF(1) or is implicated in proton conduction. The polypeptide is ATP synthase subunit delta (Haemophilus influenzae (strain PittEE)).